The primary structure comprises 524 residues: Peptide chain release factor 3 (524 aa).

Residues 8–276 (NKRRTFAIIS…GFAKYAPAPE (269 aa)) enclose the tr-type G domain. GTP contacts are provided by residues 17–24 (SHPDAGKT), 85–89 (DTPGH), and 139–142 (NKLD).

The protein belongs to the TRAFAC class translation factor GTPase superfamily. Classic translation factor GTPase family. PrfC subfamily.

It is found in the cytoplasm. Functionally, increases the formation of ribosomal termination complexes and stimulates activities of RF-1 and RF-2. It binds guanine nucleotides and has strong preference for UGA stop codons. It may interact directly with the ribosome. The stimulation of RF-1 and RF-2 is significantly reduced by GTP and GDP, but not by GMP. The protein is Peptide chain release factor 3 of Hydrogenovibrio crunogenus (strain DSM 25203 / XCL-2) (Thiomicrospira crunogena).